The sequence spans 67 residues: UPF0437 protein y4xE (67 aa).

The protein belongs to the UPF0437 family.

This is UPF0437 protein y4xE from Sinorhizobium fredii (strain NBRC 101917 / NGR234).